A 210-amino-acid polypeptide reads, in one-letter code: Outer-membrane lipoprotein LolB (210 aa).

An N-terminal signal peptide occupies residues 1-26 (MSKLKIDTKRRFSLLIALVLIISLSS). Cysteine 27 carries N-palmitoyl cysteine lipidation. Residue cysteine 27 is the site of S-diacylglycerol cysteine attachment.

This sequence belongs to the LolB family. In terms of assembly, monomer.

Its subcellular location is the cell outer membrane. Functionally, plays a critical role in the incorporation of lipoproteins in the outer membrane after they are released by the LolA protein. This Francisella tularensis subsp. novicida (strain U112) protein is Outer-membrane lipoprotein LolB.